The following is a 487-amino-acid chain: NGFI-A-binding protein 1 (487 aa).

Positions Ala4 to Phe82 are NCD1. Residues Lys126, Lys129, and Lys143 each participate in a glycyl lysine isopeptide (Lys-Gly) (interchain with G-Cter in SUMO2) cross-link. A disordered region spans residues Gln162–Ser188. Residues Ser172 and Ser183 each carry the phosphoserine modification. Lys212 participates in a covalent cross-link: Glycyl lysine isopeptide (Lys-Gly) (interchain with G-Cter in SUMO2). Residues Leu221 to Tyr310 are NCD2. Residues Glu307–Phe338 are necessary for nuclear localization. Ser328 is subject to Phosphoserine. Lys333 participates in a covalent cross-link: Glycyl lysine isopeptide (Lys-Gly) (interchain with G-Cter in SUMO1); alternate. Lys333 participates in a covalent cross-link: Glycyl lysine isopeptide (Lys-Gly) (interchain with G-Cter in SUMO2); alternate. Residues Lys355, Lys369, and Lys373 each participate in a glycyl lysine isopeptide (Lys-Gly) (interchain with G-Cter in SUMO2) cross-link. The disordered stretch occupies residues Tyr399–Arg434. Position 407 is a phosphoserine (Ser407). Residues Asn409 to Gly418 show a composition bias toward polar residues. Residues Lys454, Lys465, and Lys477 each participate in a glycyl lysine isopeptide (Lys-Gly) (interchain with G-Cter in SUMO2) cross-link. A Glycyl lysine isopeptide (Lys-Gly) (interchain with G-Cter in SUMO1); alternate cross-link involves residue Lys480. Lys480 participates in a covalent cross-link: Glycyl lysine isopeptide (Lys-Gly) (interchain with G-Cter in SUMO2); alternate.

Belongs to the NAB family. In terms of assembly, homomultimers may associate with EGR1 bound to DNA. Isoform Short is found in myeloid leukemia cell line KG-1.

The protein localises to the nucleus. Its function is as follows. Acts as a transcriptional repressor for zinc finger transcription factors EGR1 and EGR2. In Homo sapiens (Human), this protein is NGFI-A-binding protein 1 (NAB1).